The chain runs to 194 residues: Ras-related protein Rab-22A (194 aa).

Position 12-20 (12-20 (GDTGVGKSS)) interacts with GTP. The Effector region signature appears at 34–42 (INPTIGASF). GTP is bound by residues 60–64 (DTAGQ), 118–121 (NKCD), and 148–150 (SAK). Residues 170-194 (DANPPSGGKGFKLRRQPSEPQRSCC) are disordered. 2 S-geranylgeranyl cysteine lipidation sites follow: C193 and C194.

The protein belongs to the small GTPase superfamily. Rab family. As to quaternary structure, interacts directly with ZFYVE20. Interacts (in its GTP-bound form) with RINL and RABGEF1. Binds EEA1.

The protein localises to the endosome membrane. The protein resides in the cell membrane. It is found in the early endosome. It localises to the late endosome. Its subcellular location is the cell projection. The protein localises to the ruffle. The protein resides in the cytoplasmic vesicle. It is found in the phagosome. It localises to the phagosome membrane. Plays a role in endocytosis and intracellular protein transport. Mediates trafficking of TF from early endosomes to recycling endosomes. Required for NGF-mediated endocytosis of NTRK1, and subsequent neurite outgrowth. Binds GTP and GDP and has low GTPase activity. Alternates between a GTP-bound active form and a GDP-bound inactive form. The polypeptide is Ras-related protein Rab-22A (RAB22A) (Canis lupus familiaris (Dog)).